Consider the following 413-residue polypeptide: Probable tRNA pseudouridine synthase D (413 aa).

Catalysis depends on aspartate 97, which acts as the Nucleophile. Positions alanine 167–glutamate 370 constitute a TRUD domain.

This sequence belongs to the pseudouridine synthase TruD family.

It carries out the reaction uridine(13) in tRNA = pseudouridine(13) in tRNA. In terms of biological role, could be responsible for synthesis of pseudouridine from uracil-13 in transfer RNAs. The chain is Probable tRNA pseudouridine synthase D from Pyrobaculum arsenaticum (strain DSM 13514 / JCM 11321 / PZ6).